The following is a 392-amino-acid chain: Glycerophosphodiester phosphodiesterase GDPD5 (392 aa).

The first 21 residues, 1-21 (MILTRCLPLIWLSLLTVCAAG), serve as a signal peptide directing secretion. Positions 44–362 (PYNIAHRGSN…DFTGSLHNFQ (319 aa)) constitute a GP-PDE domain. Residues N120, N239, N260, and N329 are each glycosylated (N-linked (GlcNAc...) asparagine).

This sequence belongs to the glycerophosphoryl diester phosphodiesterase family. Expressed in roots, rosette and cauline leaves, stems, flowers and siliques.

It localises to the secreted. The protein localises to the cell wall. It is found in the vacuole. The enzyme catalyses a sn-glycero-3-phosphodiester + H2O = an alcohol + sn-glycerol 3-phosphate + H(+). The chain is Glycerophosphodiester phosphodiesterase GDPD5 from Arabidopsis thaliana (Mouse-ear cress).